The chain runs to 725 residues: N-alpha-acetyltransferase 35, NatC auxiliary subunit (725 aa).

A disordered region spans residues Glu-548 to Ser-573. Residues Arg-558–Pro-571 show a composition bias toward basic residues.

It belongs to the MAK10 family. As to quaternary structure, component of the N-terminal acetyltransferase C (NatC) complex, which is composed of NAA35, NAA38 and NAA30. In terms of tissue distribution, expressed in primary spermatocytes, basal epidermis, interstitial fibroblasts of skeletal muscle, and intestinal crypts.

It localises to the cytoplasm. In terms of biological role, auxillary component of the N-terminal acetyltransferase C (NatC) complex which catalyzes acetylation of N-terminal methionine residues. N-terminal acetylation protects proteins from ubiquitination and degradation by the N-end rule pathway. Involved in regulation of apoptosis and proliferation of smooth muscle cells. The protein is N-alpha-acetyltransferase 35, NatC auxiliary subunit (Naa35) of Rattus norvegicus (Rat).